The following is a 302-amino-acid chain: Dihydroorotate dehydrogenase B (NAD(+)), catalytic subunit (302 aa).

FMN-binding positions include Ser-23 and Lys-47–Ser-48. Residues Lys-47, Asn-71 to Leu-75, and Asn-125 contribute to the substrate site. Asn-125 serves as a coordination point for FMN. The active-site Nucleophile is the Cys-128. Positions 163 and 189 each coordinate FMN. Asn-190 to Thr-191 lines the substrate pocket. FMN contacts are provided by residues Gly-215, Gly-241–Gly-242, and Gly-263–Thr-264.

Belongs to the dihydroorotate dehydrogenase family. Type 1 subfamily. Heterotetramer of 2 PyrK and 2 PyrD type B subunits. FMN is required as a cofactor.

The protein resides in the cytoplasm. It carries out the reaction (S)-dihydroorotate + NAD(+) = orotate + NADH + H(+). It participates in pyrimidine metabolism; UMP biosynthesis via de novo pathway; orotate from (S)-dihydroorotate (NAD(+) route): step 1/1. Catalyzes the conversion of dihydroorotate to orotate with NAD(+) as electron acceptor. The chain is Dihydroorotate dehydrogenase B (NAD(+)), catalytic subunit (pyrD) from Thermococcus kodakarensis (strain ATCC BAA-918 / JCM 12380 / KOD1) (Pyrococcus kodakaraensis (strain KOD1)).